Reading from the N-terminus, the 350-residue chain is Autophagy-related protein 3 (350 aa).

A flexible region region spans residues 85–166; it reads NFAGDAGLEE…EEDDEAIIRD (82 aa). Residues 97–171 form a disordered region; it reads VDDGDEFKGS…AIIRDTDASG (75 aa). Positions 102–113 are enriched in basic and acidic residues; the sequence is EFKGSKGDDDGW. The segment covering 146-161 has biased composition (acidic residues); the sequence is DDDDDIPDMEDEEDDE. The Glycyl thioester intermediate role is filled by Cys244. The segment at 248–326 is handle region; the sequence is PVMKTLLDRA…DQEVAIRVDQ (79 aa). An N6-acetyllysine mark is found at Lys262 and Lys267.

It belongs to the ATG3 family. Monomer. Interacts with ATG8 through an intermediate thioester bond through the C-terminal Gly of ATG8. Also interacts with the 40 amino acid C-terminal region of the E1-like ATG7 enzyme. Also interacts with the ATG12-ATG5 conjugate. Interacts with HAT1. Post-translationally, acetylated by HAT1 at Lys-262 and Lys-267, which affects the interaction with ATG8 and prevents autophagy during both appressorium development and nutrient starvation.

It localises to the preautophagosomal structure. It is found in the cytoplasm. E2 conjugating enzyme required for the cytoplasm to vacuole transport (Cvt) and autophagy. Required for selective autophagic degradation of the nucleus (nucleophagy) as well as for mitophagy which contributes to regulate mitochondrial quantity and quality by eliminating the mitochondria to a basal level to fulfill cellular energy requirements and preventing excess ROS production. Responsible for the E2-like covalent binding of phosphatidylethanolamine to the C-terminal Gly of ATG8. The ATG12-ATG5 conjugate plays a role of an E3 and promotes the transfer of ATG8 from ATG3 to phosphatidylethanolamine (PE). This step is required for the membrane association of ATG8. The formation of the ATG8-phosphatidylethanolamine conjugate is essential for autophagy and for the cytoplasm to vacuole transport (Cvt). The ATG8-PE conjugate mediates tethering between adjacent membranes and stimulates membrane hemifusion, leading to expansion of the autophagosomal membrane during autophagy. Plays a role in appressorium formation and pathogenicity. In Pyricularia oryzae (strain 70-15 / ATCC MYA-4617 / FGSC 8958) (Rice blast fungus), this protein is Autophagy-related protein 3.